A 214-amino-acid chain; its full sequence is ATP synthase subunit a (214 aa).

The next 6 membrane-spanning stretches (helical) occupy residues 9–29, 64–84, 88–108, 121–141, 150–170, and 182–202; these read LDGM…VFMI, IMMV…TYGI, LWVN…SGYI, SGAP…SIMI, LVAN…VLSS, and LIMV…AYIF.

This sequence belongs to the ATPase A chain family. In terms of assembly, F-type ATPases have 2 components, CF(1) - the catalytic core - and CF(0) - the membrane proton channel. CF(1) has five subunits: alpha(3), beta(3), gamma(1), delta(1), epsilon(1). CF(0) has three main subunits: a, b and c.

It localises to the mitochondrion inner membrane. Its function is as follows. Mitochondrial membrane ATP synthase (F(1)F(0) ATP synthase or Complex V) produces ATP from ADP in the presence of a proton gradient across the membrane which is generated by electron transport complexes of the respiratory chain. F-type ATPases consist of two structural domains, F(1) - containing the extramembraneous catalytic core and F(0) - containing the membrane proton channel, linked together by a central stalk and a peripheral stalk. During catalysis, ATP synthesis in the catalytic domain of F(1) is coupled via a rotary mechanism of the central stalk subunits to proton translocation. Key component of the proton channel; it may play a direct role in the translocation of protons across the membrane. The polypeptide is ATP synthase subunit a (ATP6) (Albinaria caerulea (Land snail)).